The primary structure comprises 168 residues: ATP synthase subunit b (168 aa).

The chain crosses the membrane as a helical span at residues 10-30 (LYLGDMLFYLVSFLIMAALVW). The segment at 61-80 (EAQKLAAKRQEELKGSRQEA) is disordered.

Belongs to the ATPase B chain family. In terms of assembly, F-type ATPases have 2 components, F(1) - the catalytic core - and F(0) - the membrane proton channel. F(1) has five subunits: alpha(3), beta(3), gamma(1), delta(1), epsilon(1). F(0) has three main subunits: a(1), b(2) and c(10-14). The alpha and beta chains form an alternating ring which encloses part of the gamma chain. F(1) is attached to F(0) by a central stalk formed by the gamma and epsilon chains, while a peripheral stalk is formed by the delta and b chains.

Its subcellular location is the cell membrane. F(1)F(0) ATP synthase produces ATP from ADP in the presence of a proton or sodium gradient. F-type ATPases consist of two structural domains, F(1) containing the extramembraneous catalytic core and F(0) containing the membrane proton channel, linked together by a central stalk and a peripheral stalk. During catalysis, ATP synthesis in the catalytic domain of F(1) is coupled via a rotary mechanism of the central stalk subunits to proton translocation. Its function is as follows. Component of the F(0) channel, it forms part of the peripheral stalk, linking F(1) to F(0). The polypeptide is ATP synthase subunit b (Limosilactobacillus fermentum (strain NBRC 3956 / LMG 18251) (Lactobacillus fermentum)).